A 394-amino-acid polypeptide reads, in one-letter code: DNA replication and repair protein RecF (394 aa).

Residue 30–37 coordinates ATP; it reads GPNAAGKT.

It belongs to the RecF family.

The protein localises to the cytoplasm. Functionally, the RecF protein is involved in DNA metabolism; it is required for DNA replication and normal SOS inducibility. RecF binds preferentially to single-stranded, linear DNA. It also seems to bind ATP. The polypeptide is DNA replication and repair protein RecF (Roseiflexus castenholzii (strain DSM 13941 / HLO8)).